A 679-amino-acid polypeptide reads, in one-letter code: UvrABC system protein B (679 aa).

Residues Glu-25–Gly-190 enclose the Helicase ATP-binding domain. Gly-38–Thr-45 contributes to the ATP binding site. The short motif at Tyr-91–Ile-114 is the Beta-hairpin element. A Helicase C-terminal domain is found at Gln-429–Ala-591. A UVR domain is found at Pro-639–Lys-674.

Belongs to the UvrB family. As to quaternary structure, forms a heterotetramer with UvrA during the search for lesions. Interacts with UvrC in an incision complex.

The protein resides in the cytoplasm. Functionally, the UvrABC repair system catalyzes the recognition and processing of DNA lesions. A damage recognition complex composed of 2 UvrA and 2 UvrB subunits scans DNA for abnormalities. Upon binding of the UvrA(2)B(2) complex to a putative damaged site, the DNA wraps around one UvrB monomer. DNA wrap is dependent on ATP binding by UvrB and probably causes local melting of the DNA helix, facilitating insertion of UvrB beta-hairpin between the DNA strands. Then UvrB probes one DNA strand for the presence of a lesion. If a lesion is found the UvrA subunits dissociate and the UvrB-DNA preincision complex is formed. This complex is subsequently bound by UvrC and the second UvrB is released. If no lesion is found, the DNA wraps around the other UvrB subunit that will check the other stand for damage. The protein is UvrABC system protein B of Prochlorococcus marinus (strain MIT 9303).